The sequence spans 523 residues: 2-isopropylmalate synthase (523 aa).

The Pyruvate carboxyltransferase domain occupies 5–267; the sequence is VIIFDTTLRD…HTNINHHEIW (263 aa). Mn(2+) is bound by residues Asp-14, His-202, His-204, and Asn-238. Positions 392 to 523 are regulatory domain; that stretch reads RLDYFSVQSG…QNKENNKETV (132 aa).

It belongs to the alpha-IPM synthase/homocitrate synthase family. LeuA type 1 subfamily. Homodimer. It depends on Mn(2+) as a cofactor.

The protein localises to the cytoplasm. It catalyses the reaction 3-methyl-2-oxobutanoate + acetyl-CoA + H2O = (2S)-2-isopropylmalate + CoA + H(+). The protein operates within amino-acid biosynthesis; L-leucine biosynthesis; L-leucine from 3-methyl-2-oxobutanoate: step 1/4. Functionally, catalyzes the condensation of the acetyl group of acetyl-CoA with 3-methyl-2-oxobutanoate (2-ketoisovalerate) to form 3-carboxy-3-hydroxy-4-methylpentanoate (2-isopropylmalate). The sequence is that of 2-isopropylmalate synthase from Salmonella paratyphi A (strain ATCC 9150 / SARB42).